A 311-amino-acid polypeptide reads, in one-letter code: MFHHISVMLNETIDYLNVKENGVYIDCTLGGAGHALYLLNQLNDDGRLIAIDQDQTAIDNAKEVLKDHLHKVTFVHSNFRELTQILKDLNIEKVDGIYYDLGVSSPQLDIPERGFSYHHDATLDMRMDQTQELTAYEIVNNWSYEALVKIFYRYGEEKFSKQIARRIEAHREQQPITTTLELVDIIKEGIPAKARRKGGHPAKRVFQALRIAVNDELSAFEDSIEQAIELVKVDGRISVITFHSLEDRLCKQVFQEYEKGPEVPRGLPVIPEAYTPKLKRVNRKPITATEEDLDDNNRARSAKLRVAEILK.

Residues 32-34, D52, F79, D100, and Q107 each bind S-adenosyl-L-methionine; that span reads AGH.

It belongs to the methyltransferase superfamily. RsmH family.

It is found in the cytoplasm. The catalysed reaction is cytidine(1402) in 16S rRNA + S-adenosyl-L-methionine = N(4)-methylcytidine(1402) in 16S rRNA + S-adenosyl-L-homocysteine + H(+). Functionally, specifically methylates the N4 position of cytidine in position 1402 (C1402) of 16S rRNA. This is Ribosomal RNA small subunit methyltransferase H from Staphylococcus aureus (strain Mu3 / ATCC 700698).